Consider the following 165-residue polypeptide: Chorismate pyruvate-lyase (165 aa).

Met35, Arg77, Leu115, and Glu156 together coordinate substrate.

Belongs to the UbiC family. Monomer.

The protein resides in the cytoplasm. It carries out the reaction chorismate = 4-hydroxybenzoate + pyruvate. It functions in the pathway cofactor biosynthesis; ubiquinone biosynthesis. Removes the pyruvyl group from chorismate, with concomitant aromatization of the ring, to provide 4-hydroxybenzoate (4HB) for the ubiquinone pathway. This Shigella dysenteriae serotype 1 (strain Sd197) protein is Chorismate pyruvate-lyase.